The chain runs to 395 residues: Elongation factor Tu (395 aa).

The 195-residue stretch at Lys10 to Gln204 folds into the tr-type G domain. Residues Gly19 to Thr26 are G1. A GTP-binding site is contributed by Gly19–Thr26. Thr26 is a binding site for Mg(2+). The G2 stretch occupies residues Gly60 to Ser64. A G3 region spans residues Asp81 to Gly84. GTP contacts are provided by residues Asp81 to His85 and Asn136 to Asp139. The interval Asn136–Asp139 is G4. Residues Ser174 to Leu176 are G5.

The protein belongs to the TRAFAC class translation factor GTPase superfamily. Classic translation factor GTPase family. EF-Tu/EF-1A subfamily. As to quaternary structure, monomer.

The protein localises to the cytoplasm. The catalysed reaction is GTP + H2O = GDP + phosphate + H(+). Its function is as follows. GTP hydrolase that promotes the GTP-dependent binding of aminoacyl-tRNA to the A-site of ribosomes during protein biosynthesis. This Geobacillus sp. (strain WCH70) protein is Elongation factor Tu.